Reading from the N-terminus, the 326-residue chain is Biotin synthase (326 aa).

Residues 50 to 279 (FNGEKVDVEQ…ESVIKISGGR (230 aa)) enclose the Radical SAM core domain. [4Fe-4S] cluster-binding residues include C68, C72, and C75. The [2Fe-2S] cluster site is built by C112, C145, C204, and K274.

Belongs to the radical SAM superfamily. Biotin synthase family. As to quaternary structure, homodimer. Requires [4Fe-4S] cluster as cofactor. It depends on [2Fe-2S] cluster as a cofactor.

The catalysed reaction is (4R,5S)-dethiobiotin + (sulfur carrier)-SH + 2 reduced [2Fe-2S]-[ferredoxin] + 2 S-adenosyl-L-methionine = (sulfur carrier)-H + biotin + 2 5'-deoxyadenosine + 2 L-methionine + 2 oxidized [2Fe-2S]-[ferredoxin]. Its pathway is cofactor biosynthesis; biotin biosynthesis; biotin from 7,8-diaminononanoate: step 2/2. Its function is as follows. Catalyzes the conversion of dethiobiotin (DTB) to biotin by the insertion of a sulfur atom into dethiobiotin via a radical-based mechanism. The chain is Biotin synthase from Nitrosopumilus maritimus (strain SCM1).